The chain runs to 834 residues: Periplasmic nitrate reductase (834 aa).

The tat-type signal signal peptide spans 1–29 (MKLSRREFAKANAAAIAAAAAGLPLASTA). Residues 41–97 (LDWNKAPCRFCGTGCSVMVATRDNRVVATHGDVKAEVNRGLNCVKGYFLSKIMYGVD) form the 4Fe-4S Mo/W bis-MGD-type domain. 4 residues coordinate [4Fe-4S] cluster: Cys-48, Cys-51, Cys-55, and Cys-83. Mo-bis(molybdopterin guanine dinucleotide) is bound by residues Lys-85, Gln-152, Asn-177, Cys-181, 214–221 (WGSNMAEM), 245–249 (STFEH), 264–266 (QTD), Met-375, Gln-379, Asn-485, 511–512 (SD), Lys-534, Asp-561, and 721–730 (TGRVLEHWHT). Phe-797 is a substrate binding site. 2 residues coordinate Mo-bis(molybdopterin guanine dinucleotide): Asn-805 and Lys-822.

Belongs to the prokaryotic molybdopterin-containing oxidoreductase family. NasA/NapA/NarB subfamily. As to quaternary structure, component of the periplasmic nitrate reductase NapAB complex composed of NapA and NapB. [4Fe-4S] cluster serves as cofactor. It depends on Mo-bis(molybdopterin guanine dinucleotide) as a cofactor. Predicted to be exported by the Tat system. The position of the signal peptide cleavage has not been experimentally proven.

The protein resides in the periplasm. The catalysed reaction is 2 Fe(II)-[cytochrome] + nitrate + 2 H(+) = 2 Fe(III)-[cytochrome] + nitrite + H2O. Catalytic subunit of the periplasmic nitrate reductase complex NapAB. Receives electrons from NapB and catalyzes the reduction of nitrate to nitrite. The protein is Periplasmic nitrate reductase of Ectopseudomonas mendocina (strain ymp) (Pseudomonas mendocina).